Consider the following 744-residue polypeptide: 6-phosphofructo-2-kinase/fructose-2,6-bisphosphatase (744 aa).

Disordered stretches follow at residues 1–23 (MGSG…GGQL) and 213–245 (RSLS…DGSP). Residue G2 is the site of N-myristoyl glycine attachment. In terms of domain architecture, CBM20 spans 17–122 (NGGGGQLYVS…GDARLALFRL (106 aa)). Positions 213 to 232 (RSLSASGSFRNDSTPKAAQR) are enriched in polar residues. Residue S220 is modified to Phosphoserine; by CPK3. Residues S276 and S295 each carry the phosphoserine modification. The interval 301 to 549 (SLSASSFLID…VFFLVNTHLT (249 aa)) is 6-phosphofructo-2-kinase. At S303 the chain carries Phosphoserine; by CPK3. An ATP-binding site is contributed by 349–357 (GLPARGKTF). Residues R382 and R406 each coordinate beta-D-fructose 6-phosphate. Residue D431 is part of the active site. T433 and R439 together coordinate beta-D-fructose 6-phosphate. Residue C460 is part of the active site. 469-474 (NIRLKI) is a binding site for ATP. 2 residues coordinate beta-D-fructose 6-phosphate: R496 and Y500. Positions 550 to 744 (PRPILLTRHG…VQEKRYKLMD (195 aa)) are fructose-2,6-bisphosphatase. R557 provides a ligand contact to beta-D-fructose 2,6-bisphosphate. H558 functions as the Tele-phosphohistidine intermediate in the catalytic mechanism. Residues N564 and G570 each coordinate beta-D-fructose 2,6-bisphosphate. E630 functions as the Proton donor/acceptor in the catalytic mechanism. Positions 641, 655, 659, 670, 697, and 701 each coordinate beta-D-fructose 2,6-bisphosphate. 652-655 (YESR) contacts ATP. 697–701 (QAVLR) contacts ATP.

This sequence in the C-terminal section; belongs to the phosphoglycerate mutase family. In terms of assembly, interacts with 14-3-3 proteins; these interactions may regulate both nitrate assimilation and sucrose/starch partitioning in leaves during the diurnal cycle. In terms of processing, phosphorylation at Ser-220 and Ser-303 by CPK3 promotes 14-3-3 proteins binding.

The protein localises to the membrane. Its subcellular location is the cytoplasm. It catalyses the reaction beta-D-fructose 2,6-bisphosphate + H2O = beta-D-fructose 6-phosphate + phosphate. The catalysed reaction is beta-D-fructose 6-phosphate + ATP = beta-D-fructose 2,6-bisphosphate + ADP + H(+). With respect to regulation, 6-phosphofructo-2-kinase activity is activated by pyruvate. 6-phosphofructo-2-kinase activity is inhibited by PPi, phosphoenolpyruvate and 2-phosphoglycerate. Fructose-2,6-bisphosphatase activity is inhibited by pyruvate, fructose 1,6-bisphosphate and 6-phosphogluconate. Functionally, synthesis and degradation of fructose 2,6-bisphosphate. Regulates carbon partitioning between sucrose versus starch during the diurnal cycle. In Arabidopsis thaliana (Mouse-ear cress), this protein is 6-phosphofructo-2-kinase/fructose-2,6-bisphosphatase (FKFBP).